Reading from the N-terminus, the 170-residue chain is MTKVAAEIVRSAIDPQWFRAVLGQYPTGVCAVTAMDPDGKMSGMAVGSFTSVSLNPPLVAFLPDRSSTSWPKIERAGKFCVNVLSDQQLGVCKRFASKDEDKFSGLVYRLSDNGSPIIEGVVAWIDCDLHSVQEAGDHYIVIGSVRELQVESEDSALLFYRGGYGGFAAI.

NAD(+)-binding positions include Ser-51, His-138, and Phe-159–Gly-162.

This sequence belongs to the non-flavoprotein flavin reductase family. In terms of assembly, homodimer. Likely forms a loose transient complex with monooxygenases for which it provides FMNH(2).

It carries out the reaction FMNH2 + NAD(+) = FMN + NADH + 2 H(+). It catalyses the reaction FADH2 + NAD(+) = FAD + NADH + 2 H(+). Catalyzes the reduction of FMN, and to a lesser extent, FAD, using NADH as an electron donor. Is able to provide the FMNH(2) required for the Baeyer-Villiger oxidations catalyzed by 2,5-diketocamphane monooxygenases and 3,6-diketocamphane monooxygenase. NADPH acts as a very poor cosubstrate. The sequence is that of Flavin reductase from Pseudomonas putida (Arthrobacter siderocapsulatus).